A 90-amino-acid polypeptide reads, in one-letter code: DNA-binding protein HU-alpha (90 aa).

It belongs to the bacterial histone-like protein family. In terms of assembly, heterodimer of an alpha and a beta chain.

Its function is as follows. Histone-like DNA-binding protein which is capable of wrapping DNA to stabilize it, and thus to prevent its denaturation under extreme environmental conditions. The sequence is that of DNA-binding protein HU-alpha (hupA) from Vibrio cholerae serotype O1 (strain ATCC 39315 / El Tor Inaba N16961).